We begin with the raw amino-acid sequence, 194 residues long: Probable RNA 2'-phosphotransferase (194 aa).

The protein belongs to the KptA/TPT1 family.

Functionally, removes the 2'-phosphate from RNA via an intermediate in which the phosphate is ADP-ribosylated by NAD followed by a presumed transesterification to release the RNA and generate ADP-ribose 1''-2''-cyclic phosphate (APPR&gt;P). May function as an ADP-ribosylase. This chain is Probable RNA 2'-phosphotransferase, found in Escherichia coli O45:K1 (strain S88 / ExPEC).